Here is a 320-residue protein sequence, read N- to C-terminus: Putative thiosulfate sulfurtransferase (320 aa).

The first 37 residues, 1–37, serve as a signal peptide directing secretion; the sequence is MSVRSLRWPRQKAFLAVISLVVAVLLAVPGWLTPATA. 2 Rhodanese domains span residues 56-166 and 194-315; these read NNKQ…PVTK and LTGK…PVET. The active-site Cysteine persulfide intermediate is C274.

The protein resides in the periplasm. It carries out the reaction thiosulfate + hydrogen cyanide = thiocyanate + sulfite + 2 H(+). In terms of biological role, may be a sulfotransferase involved in the transport of sulfate. Displays very low rhodanese activity. In Synechococcus elongatus (strain ATCC 33912 / PCC 7942 / FACHB-805) (Anacystis nidulans R2), this protein is Putative thiosulfate sulfurtransferase (rhdA).